We begin with the raw amino-acid sequence, 170 residues long: Crossover junction endodeoxyribonuclease RuvC (170 aa).

Residues Asp9, Glu70, and Asp145 contribute to the active site. Mg(2+)-binding residues include Asp9, Glu70, and Asp145.

It belongs to the RuvC family. Homodimer which binds Holliday junction (HJ) DNA. The HJ becomes 2-fold symmetrical on binding to RuvC with unstacked arms; it has a different conformation from HJ DNA in complex with RuvA. In the full resolvosome a probable DNA-RuvA(4)-RuvB(12)-RuvC(2) complex forms which resolves the HJ. Mg(2+) is required as a cofactor.

The protein localises to the cytoplasm. It catalyses the reaction Endonucleolytic cleavage at a junction such as a reciprocal single-stranded crossover between two homologous DNA duplexes (Holliday junction).. Its function is as follows. The RuvA-RuvB-RuvC complex processes Holliday junction (HJ) DNA during genetic recombination and DNA repair. Endonuclease that resolves HJ intermediates. Cleaves cruciform DNA by making single-stranded nicks across the HJ at symmetrical positions within the homologous arms, yielding a 5'-phosphate and a 3'-hydroxyl group; requires a central core of homology in the junction. The consensus cleavage sequence is 5'-(A/T)TT(C/G)-3'. Cleavage occurs on the 3'-side of the TT dinucleotide at the point of strand exchange. HJ branch migration catalyzed by RuvA-RuvB allows RuvC to scan DNA until it finds its consensus sequence, where it cleaves and resolves the cruciform DNA. This is Crossover junction endodeoxyribonuclease RuvC from Chlamydia muridarum (strain MoPn / Nigg).